Here is a 168-residue protein sequence, read N- to C-terminus: Thiol peroxidase (168 aa).

In terms of domain architecture, Thioredoxin spans 19–168; the sequence is PQAGSKAQAF…YDAALNVLKA (150 aa). Residue cysteine 61 is the Cysteine sulfenic acid (-SOH) intermediate of the active site. An intrachain disulfide couples cysteine 61 to cysteine 95.

This sequence belongs to the peroxiredoxin family. Tpx subfamily. As to quaternary structure, homodimer.

The enzyme catalyses a hydroperoxide + [thioredoxin]-dithiol = an alcohol + [thioredoxin]-disulfide + H2O. Its function is as follows. Thiol-specific peroxidase that catalyzes the reduction of hydrogen peroxide and organic hydroperoxides to water and alcohols, respectively. Plays a role in cell protection against oxidative stress by detoxifying peroxides. In Salmonella typhi, this protein is Thiol peroxidase.